The chain runs to 234 residues: Elongation factor Tu, chloroplastic (234 aa).

A tr-type G domain is found at Lys-1–Glu-125. Residue Asn-47–Asp-50 participates in GTP binding.

This sequence belongs to the TRAFAC class translation factor GTPase superfamily. Classic translation factor GTPase family. EF-Tu/EF-1A subfamily.

It is found in the plastid. The protein resides in the chloroplast. It carries out the reaction GTP + H2O = GDP + phosphate + H(+). GTP hydrolase that promotes the GTP-dependent binding of aminoacyl-tRNA to the A-site of ribosomes during protein biosynthesis. The polypeptide is Elongation factor Tu, chloroplastic (tufA) (Pandorina morum (Freshwater green alga)).